The sequence spans 459 residues: Cysteine--tRNA ligase (459 aa).

Residue cysteine 28 coordinates Zn(2+). Positions 30 to 40 match the 'HIGH' region motif; sequence VTVYDLCHFGH. Residues cysteine 209, histidine 234, and glutamate 238 each contribute to the Zn(2+) site. The short motif at 266–270 is the 'KMSKS' region element; that stretch reads KMSKS. Residue lysine 269 participates in ATP binding.

Belongs to the class-I aminoacyl-tRNA synthetase family. As to quaternary structure, monomer. Zn(2+) serves as cofactor.

It localises to the cytoplasm. The catalysed reaction is tRNA(Cys) + L-cysteine + ATP = L-cysteinyl-tRNA(Cys) + AMP + diphosphate. The polypeptide is Cysteine--tRNA ligase (Actinobacillus pleuropneumoniae serotype 3 (strain JL03)).